The chain runs to 78 residues: Omega-conotoxin-like ArMKLT1-011 (78 aa).

Positions 1 to 22 are cleaved as a signal peptide; sequence MKLTCMMIVAVLFLTAWTSVTA. Residues 23–48 constitute a propeptide that is removed on maturation; that stretch reads VNTRGELENLFLRASHEMNSEASKLD. Disulfide bonds link Cys-52-Cys-69, Cys-59-Cys-73, and Cys-68-Cys-77.

The protein belongs to the conotoxin O1 superfamily. In terms of tissue distribution, expressed by the venom duct.

It is found in the secreted. In terms of biological role, omega-conotoxins act at presynaptic membranes, they bind and block voltage-gated calcium channels (Cav). The protein is Omega-conotoxin-like ArMKLT1-011 of Conus arenatus (Sand-dusted cone).